Consider the following 860-residue polypeptide: Leucine--tRNA ligase (860 aa).

The 'HIGH' region signature appears at 42–52 (PYPSGRLHMGH). The 'KMSKS' region motif lies at 619–623 (KMSKS). K622 contacts ATP.

It belongs to the class-I aminoacyl-tRNA synthetase family.

It localises to the cytoplasm. It carries out the reaction tRNA(Leu) + L-leucine + ATP = L-leucyl-tRNA(Leu) + AMP + diphosphate. This is Leucine--tRNA ligase from Mannheimia succiniciproducens (strain KCTC 0769BP / MBEL55E).